The following is a 260-amino-acid chain: Snake venom serine protease 2B (260 aa).

The N-terminal stretch at 1 to 18 (MVLIRVLANLLILQLSYA) is a signal peptide. Positions 19–24 (QKSSEL) are excised as a propeptide. A Peptidase S1 domain is found at 25–251 (VVGGDECNIN…HLDWIQSIIA (227 aa)). 6 disulfide bridges follow: C31/C165, C52/C68, C102/C258, C144/C212, C176/C191, and C202/C227. The active-site Charge relay system is H67. N101 and N105 each carry an N-linked (GlcNAc...) asparagine glycan. Residue D112 is the Charge relay system of the active site. 2 N-linked (GlcNAc...) asparagine glycosylation sites follow: N123 and N156. Residue S206 is the Charge relay system of the active site.

The protein belongs to the peptidase S1 family. Snake venom subfamily. In terms of assembly, monomer. Expressed by the venom gland.

The protein resides in the secreted. Its function is as follows. Snake venom serine protease that may act in the hemostasis system of the prey. This is Snake venom serine protease 2B (TLG2B) from Craspedocephalus gramineus (Bamboo pit viper).